The primary structure comprises 998 residues: Beta-galactosidase (998 aa).

Glutamate 431 (proton donor) is an active-site residue. The active-site Nucleophile is glutamate 508.

The protein belongs to the glycosyl hydrolase 2 family.

The catalysed reaction is Hydrolysis of terminal non-reducing beta-D-galactose residues in beta-D-galactosides.. This chain is Beta-galactosidase (lacZ), found in Lactococcus lactis subsp. lactis (strain IL1403) (Streptococcus lactis).